We begin with the raw amino-acid sequence, 147 residues long: uncharacterized protein (147 aa).

The interval 29-147 is disordered; the sequence is PYGNNSVHQG…GHHHGHHHKH (119 aa). Polar residues-rich tracts occupy residues 34–45 and 60–73; these read SVHQGQPHTDQN and PQAQYGNAGQNQPS. A compositionally biased stretch (gly residues) spans 75–92; sequence PFGGAGYTGPTAGTGFGN. The span at 122-147 shows a compositional bias: basic residues; that stretch reads DGHHKKHGRKEHDHHHGHHHGHHHKH.

This is an uncharacterized protein from Caenorhabditis elegans.